A 244-amino-acid chain; its full sequence is NH(3)-dependent NAD(+) synthetase (244 aa).

29-36 lines the ATP pocket; sequence GISGGIDS. Residue Asp35 participates in Mg(2+) binding. Arg113 contacts deamido-NAD(+). Thr133 contacts ATP. Glu138 contributes to the Mg(2+) binding site. Lys146 and Asp153 together coordinate deamido-NAD(+). Residues Lys162 and Thr184 each contribute to the ATP site. 230–231 serves as a coordination point for deamido-NAD(+); that stretch reads HK.

Belongs to the NAD synthetase family. Homodimer.

The enzyme catalyses deamido-NAD(+) + NH4(+) + ATP = AMP + diphosphate + NAD(+) + H(+). Its pathway is cofactor biosynthesis; NAD(+) biosynthesis; NAD(+) from deamido-NAD(+) (ammonia route): step 1/1. Functionally, catalyzes the ATP-dependent amidation of deamido-NAD to form NAD. Uses ammonia as a nitrogen source. The chain is NH(3)-dependent NAD(+) synthetase from Mesoplasma florum (strain ATCC 33453 / NBRC 100688 / NCTC 11704 / L1) (Acholeplasma florum).